Reading from the N-terminus, the 238-residue chain is Small ribosomal subunit protein eS4 (238 aa).

One can recognise an S4 RNA-binding domain in the interval 38 to 110; that stretch reads LPLAIIIRDV…EKKYYALIPI (73 aa).

The protein belongs to the eukaryotic ribosomal protein eS4 family.

This chain is Small ribosomal subunit protein eS4, found in Pyrobaculum islandicum (strain DSM 4184 / JCM 9189 / GEO3).